A 622-amino-acid polypeptide reads, in one-letter code: WD repeat-containing protein 70 (622 aa).

Residues 36–55 (RTAVERSKQTLEAREKEEQL) show a composition bias toward basic and acidic residues. Residues 36–141 (RTAVERSKQT…DNPVKDIPDS (106 aa)) form a disordered region. Positions 67 to 84 (SSSGQKKTKASGSSSGSE) are enriched in low complexity. The span at 120–132 (SDDEDDEEHEDDD) shows a compositional bias: acidic residues. 7 WD repeats span residues 148-187 (HGTK…ASLQ), 195-236 (CECH…ECVK), 249-289 (GHTA…KHKG), 298-337 (GKPV…HTKF), 344-383 (TPGT…NPLN), 387-434 (GLEN…KIYE), and 437-476 (VTEA…QRGA). Positions 508–533 (REPRQRSTRKQLEKDRLDPVKSHKPE) are enriched in basic and acidic residues. Disordered stretches follow at residues 508–549 (REPR…GTHG) and 602–622 (AEVD…KRKI). A compositionally biased stretch (gly residues) spans 539 to 549 (PGRGGRVGTHG). The segment covering 604–614 (VDSDEEEPDNE) has biased composition (acidic residues).

The protein belongs to the WD repeat GAD-1 family.

This Xenopus laevis (African clawed frog) protein is WD repeat-containing protein 70 (wdr70).